A 156-amino-acid chain; its full sequence is 6,7-dimethyl-8-ribityllumazine synthase (156 aa).

5-amino-6-(D-ribitylamino)uracil is bound by residues Phe22, Ala57–Glu59, and Thr81–Ile83. Gly86–Thr87 is a binding site for (2S)-2-hydroxy-3-oxobutyl phosphate. His89 functions as the Proton donor in the catalytic mechanism. Position 114 (Phe114) interacts with 5-amino-6-(D-ribitylamino)uracil. A (2S)-2-hydroxy-3-oxobutyl phosphate-binding site is contributed by Arg128.

Belongs to the DMRL synthase family. As to quaternary structure, forms an icosahedral capsid composed of 60 subunits, arranged as a dodecamer of pentamers.

The enzyme catalyses (2S)-2-hydroxy-3-oxobutyl phosphate + 5-amino-6-(D-ribitylamino)uracil = 6,7-dimethyl-8-(1-D-ribityl)lumazine + phosphate + 2 H2O + H(+). Its pathway is cofactor biosynthesis; riboflavin biosynthesis; riboflavin from 2-hydroxy-3-oxobutyl phosphate and 5-amino-6-(D-ribitylamino)uracil: step 1/2. Functionally, catalyzes the formation of 6,7-dimethyl-8-ribityllumazine by condensation of 5-amino-6-(D-ribitylamino)uracil with 3,4-dihydroxy-2-butanone 4-phosphate. This is the penultimate step in the biosynthesis of riboflavin. The sequence is that of 6,7-dimethyl-8-ribityllumazine synthase from Proteus mirabilis (strain HI4320).